The sequence spans 2236 residues: uncharacterized protein (2236 aa).

Spectrin repeat units lie at residues 46–146 and 238–335; these read QVYL…RQLE and QKFV…TDIE. 2 coiled-coil regions span residues 496–541 and 603–631; these read VVEQ…TVNS and DDQQ…VGRQ. Spectrin repeat units follow at residues 839–949, 1048–1146, 1261–1361, 1367–1459, and 1562–1667; these read YEYD…KTLK, KKLE…KRME, LGAE…VDLN, ILID…KSLA, and QKVV…NRLE. The stretch at 1835-1869 forms a coiled coil; it reads QNSTDAEKKLSLVSERLNALKKQLDLLAEKIAVDD. EF-hand domains follow at residues 2104-2139 and 2141-2176; these read KQLH…QGYN and SAEN…HETT. Ca(2+) contacts are provided by D2154, S2156, T2158, H2160, and D2165.

This sequence belongs to the spectrin family.

This is an uncharacterized protein from Caenorhabditis elegans.